Here is a 158-residue protein sequence, read N- to C-terminus: Large ribosomal subunit protein uL16 (158 aa).

This sequence belongs to the universal ribosomal protein uL16 family. Part of the 50S ribosomal subunit.

Functionally, binds 23S rRNA and is also seen to make contacts with the A and possibly P site tRNAs. In Synechococcus sp. (strain CC9902), this protein is Large ribosomal subunit protein uL16.